The primary structure comprises 356 residues: Peptide chain release factor 1 (356 aa).

Q234 carries the post-translational modification N5-methylglutamine.

It belongs to the prokaryotic/mitochondrial release factor family. Methylated by PrmC. Methylation increases the termination efficiency of RF1.

It is found in the cytoplasm. Functionally, peptide chain release factor 1 directs the termination of translation in response to the peptide chain termination codons UAG and UAA. The sequence is that of Peptide chain release factor 1 from Exiguobacterium sp. (strain ATCC BAA-1283 / AT1b).